A 363-amino-acid polypeptide reads, in one-letter code: Peroxisomal (S)-2-hydroxyacid oxidase GLO3 (363 aa).

The FMN hydroxy acid dehydrogenase domain occupies 1–357 (MDQIVNVDEF…TRNHVRTENE (357 aa)). Residues 78-80 (PTG), Ser107, 128-130 (QIY), and Thr156 each bind FMN. Tyr130 serves as a coordination point for a 2-oxocarboxylate. A 2-oxocarboxylate is bound at residue Arg165. Residues Lys228 and Ser250 each coordinate FMN. Residue His252 is the Proton acceptor of the active site. Residue Arg255 participates in a 2-oxocarboxylate binding. Residues 283-287 (DGGVR) and 306-307 (GR) each bind FMN. Positions 361 to 363 (SML) match the Microbody targeting signal motif.

This sequence belongs to the FMN-dependent alpha-hydroxy acid dehydrogenase family. In terms of assembly, homotetramer. FMN serves as cofactor.

It is found in the peroxisome. The enzyme catalyses a (2S)-2-hydroxycarboxylate + O2 = a 2-oxocarboxylate + H2O2. The catalysed reaction is 2-hydroxy-4-methylpentanoate + O2 = 4-methyl-2-oxopentanoate + H2O2. It catalyses the reaction 2-hydroxyhexanoate + O2 = 2-oxohexanoate + H2O2. It carries out the reaction 2-hydroxyoctanoate + O2 = 2-oxooctanoate + H2O2. In terms of biological role, oxidase that catalyzes the oxidation of a broad range of 2-hydroxyacids to the corresponding 2-oxoacids, with a reduction of O2 to H2O2. Displays the highest activity with leucic acid (2-hydroxy-4-methylpentanoate) and has intermediate activity with 2-hydroxyhexanoate and 2-hydroxyoctanote. Shows lower activity with 2-hydroxydodecanoate, valic acid, and isoleucic acid and extremely low activity with glycolate and L-lactate. Cannot use 2-hydroxyhexadecanoate or D-lactate as substrates. May be involved in the conversion or degradation of 2-hydroxyacids produced during the metabolism of fatty acids or amino acids. In Arabidopsis thaliana (Mouse-ear cress), this protein is Peroxisomal (S)-2-hydroxyacid oxidase GLO3 (GLO3).